The following is a 342-amino-acid chain: S-adenosylmethionine:tRNA ribosyltransferase-isomerase (342 aa).

The protein belongs to the QueA family. Monomer.

The protein resides in the cytoplasm. It catalyses the reaction 7-aminomethyl-7-carbaguanosine(34) in tRNA + S-adenosyl-L-methionine = epoxyqueuosine(34) in tRNA + adenine + L-methionine + 2 H(+). It functions in the pathway tRNA modification; tRNA-queuosine biosynthesis. Functionally, transfers and isomerizes the ribose moiety from AdoMet to the 7-aminomethyl group of 7-deazaguanine (preQ1-tRNA) to give epoxyqueuosine (oQ-tRNA). This Listeria monocytogenes serovar 1/2a (strain ATCC BAA-679 / EGD-e) protein is S-adenosylmethionine:tRNA ribosyltransferase-isomerase.